Here is a 688-residue protein sequence, read N- to C-terminus: Glycine--tRNA ligase beta subunit (688 aa).

The protein belongs to the class-II aminoacyl-tRNA synthetase family. In terms of assembly, tetramer of two alpha and two beta subunits.

It is found in the cytoplasm. The enzyme catalyses tRNA(Gly) + glycine + ATP = glycyl-tRNA(Gly) + AMP + diphosphate. This chain is Glycine--tRNA ligase beta subunit, found in Colwellia psychrerythraea (strain 34H / ATCC BAA-681) (Vibrio psychroerythus).